Reading from the N-terminus, the 512-residue chain is Probable malate:quinone oxidoreductase (512 aa).

Belongs to the MQO family. FAD is required as a cofactor.

The enzyme catalyses (S)-malate + a quinone = a quinol + oxaloacetate. Its pathway is carbohydrate metabolism; tricarboxylic acid cycle; oxaloacetate from (S)-malate (quinone route): step 1/1. The sequence is that of Probable malate:quinone oxidoreductase from Rhodococcus erythropolis (strain PR4 / NBRC 100887).